The following is a 254-amino-acid chain: uncharacterized protein (254 aa).

Positions 6–239 (LSVDGVEFAY…NIKAVYGVDA (234 aa)) constitute an ABC transporter domain. Position 38–45 (38–45 (GVNGAGKS)) interacts with ATP.

This sequence belongs to the ABC transporter superfamily.

This is an uncharacterized protein from Methanocaldococcus jannaschii (strain ATCC 43067 / DSM 2661 / JAL-1 / JCM 10045 / NBRC 100440) (Methanococcus jannaschii).